The sequence spans 382 residues: V-type proton ATPase subunit C 1 (382 aa).

Thr-2 is modified (N-acetylthreonine).

This sequence belongs to the V-ATPase C subunit family. In terms of assembly, V-ATPase is a heteromultimeric enzyme made up of two complexes: the ATP-hydrolytic V1 complex and the proton translocation V0 complex. The V1 complex consists of three catalytic AB heterodimers that form a heterohexamer, three peripheral stalks each consisting of EG heterodimers, one central rotor including subunits D and F, and the regulatory subunits C and H. The proton translocation complex V0 consists of the proton transport subunit a, a ring of proteolipid subunits c9c'', rotary subunit d, subunits e and f, and two accessory subunits.

Subunit of the V1 complex of vacuolar(H+)-ATPase (V-ATPase), a multisubunit enzyme composed of a peripheral complex (V1) that hydrolyzes ATP and a membrane integral complex (V0) that translocates protons. V-ATPase is responsible for acidifying and maintaining the pH of intracellular compartments and in some cell types, is targeted to the plasma membrane, where it is responsible for acidifying the extracellular environment. Subunit C is necessary for the assembly of the catalytic sector of the enzyme and is likely to have a specific function in its catalytic activity. In Xenopus laevis (African clawed frog), this protein is V-type proton ATPase subunit C 1 (atp6v1c1).